A 67-amino-acid polypeptide reads, in one-letter code: uncharacterized protein (67 aa).

Transmembrane regions (helical) follow at residues 13 to 32 (IACL…GFIV) and 42 to 64 (RLTN…TLGL).

The protein localises to the membrane. This is an uncharacterized protein from Saccharomyces cerevisiae (strain ATCC 204508 / S288c) (Baker's yeast).